The following is a 300-amino-acid chain: D-alanine--D-alanine ligase (300 aa).

Residues lysine 99–lysine 293 form the ATP-grasp domain. An ATP-binding site is contributed by isoleucine 126–threonine 181. Positions 248, 260, and 262 each coordinate Mg(2+).

The protein belongs to the D-alanine--D-alanine ligase family. Mg(2+) is required as a cofactor. The cofactor is Mn(2+).

The protein localises to the cytoplasm. The enzyme catalyses 2 D-alanine + ATP = D-alanyl-D-alanine + ADP + phosphate + H(+). Its pathway is cell wall biogenesis; peptidoglycan biosynthesis. In terms of biological role, cell wall formation. In Clostridium botulinum (strain 657 / Type Ba4), this protein is D-alanine--D-alanine ligase.